The following is a 348-amino-acid chain: Chloroacetanilide N-alkylformylase, oxygenase component (348 aa).

Positions 7–108 (WYAVAWCDEV…ARERHKLIWA (102 aa)) constitute a Rieske domain. Positions 47, 49, 66, and 69 each coordinate [2Fe-2S] cluster. Fe cation contacts are provided by His159 and His164. Residue His250 participates in substrate binding. Asp293 provides a ligand contact to Fe cation.

In terms of assembly, the chloroacetanilide N-alkylformylase multicomponent enzyme system is composed of an oxygenase component (CndA) and an electron transfer component formed by a ferredoxin reductase (CndC1) and a ferredoxin (CndB1). In vitro, chloroacetanilide N-alkylformylase assays in which CndB1 is substituted for CndB2 demonstrate that the two enzymes possess nearly identical activities. It depends on [2Fe-2S] cluster as a cofactor.

The enzyme catalyses butachlor + 2 reduced [2Fe-2S]-[ferredoxin] + O2 + 2 H(+) = butyl formate + N-(2,6-diethylphenyl)-2-chloroacetamide + 2 oxidized [2Fe-2S]-[ferredoxin] + H2O. The catalysed reaction is alachlor + 2 reduced [2Fe-2S]-[ferredoxin] + O2 + 2 H(+) = methyl formate + N-(2,6-diethylphenyl)-2-chloroacetamide + 2 oxidized [2Fe-2S]-[ferredoxin] + H2O. It carries out the reaction acetochlor + 2 reduced [2Fe-2S]-[ferredoxin] + O2 + 2 H(+) = N-(2-ethyl-6-methylphenyl)-2-chloroacetamide + ethyl formate + 2 oxidized [2Fe-2S]-[ferredoxin] + H2O. With respect to regulation, activity enhanced by Fe(2+) and Mg(2+) ions. Divalent cations such as Ca(2+), Cr(2+), Co(2+), and Mn(2+) show moderate inhibition of the enzyme, whereas heavy metal ions such as Ag(+), Cu(2+), Pb(2+), Hg(2+), Ni(2+) and Zn(2+) severely inhibit the activity. Functionally, component of the chloroacetanilide N-alkylformylase multicomponent enzyme system involved in the degradation of chloroacetanilide herbicides (N-alkoxyalkyl-N-chloroacetyl-substituted aniline derivatives). In vitro, catalyzes the N-dealkylation of butachlor, alachlor and acetochlor to yield 2-chloro-N-(2,6-diethylphenyl)acetamide (CDEPA) (for alachlor and butachlor) and 2-chloro-N-(2-methyl-6-ethylphenyl)acetamide (CMEPA) (for acetochlor). The sequence is that of Chloroacetanilide N-alkylformylase, oxygenase component from Rhizorhabdus wittichii (strain DC-6 / KACC 16600) (Sphingomonas wittichii).